Reading from the N-terminus, the 244-residue chain is UPF0280 protein Mhun_0136 (244 aa).

It belongs to the UPF0280 family.

The protein is UPF0280 protein Mhun_0136 of Methanospirillum hungatei JF-1 (strain ATCC 27890 / DSM 864 / NBRC 100397 / JF-1).